The chain runs to 147 residues: D-aminoacyl-tRNA deacylase (147 aa).

The Gly-cisPro motif, important for rejection of L-amino acids motif lies at 136–137; sequence GP.

Belongs to the DTD family. As to quaternary structure, homodimer.

It is found in the cytoplasm. The catalysed reaction is glycyl-tRNA(Ala) + H2O = tRNA(Ala) + glycine + H(+). It carries out the reaction a D-aminoacyl-tRNA + H2O = a tRNA + a D-alpha-amino acid + H(+). Its function is as follows. An aminoacyl-tRNA editing enzyme that deacylates mischarged D-aminoacyl-tRNAs. Also deacylates mischarged glycyl-tRNA(Ala), protecting cells against glycine mischarging by AlaRS. Acts via tRNA-based rather than protein-based catalysis; rejects L-amino acids rather than detecting D-amino acids in the active site. By recycling D-aminoacyl-tRNA to D-amino acids and free tRNA molecules, this enzyme counteracts the toxicity associated with the formation of D-aminoacyl-tRNA entities in vivo and helps enforce protein L-homochirality. This Streptococcus sanguinis (strain SK36) protein is D-aminoacyl-tRNA deacylase.